A 302-amino-acid polypeptide reads, in one-letter code: Potassium/proton antiporter CemA (302 aa).

The next 4 helical transmembrane spans lie at 55–75 (VFVSIQCLLSLIFIPLIITFL), 187–207 (FVSFGTFALLVIILKPQIIIL), 225–247 (FLLILGTDLLVGFHSPRGWELFL), and 262–282 (FIFLFVATLPVLLDTVFKYWI).

The protein belongs to the CemA family.

The protein localises to the plastid. Its subcellular location is the chloroplast inner membrane. The catalysed reaction is K(+)(in) + H(+)(out) = K(+)(out) + H(+)(in). Its function is as follows. Contributes to K(+)/H(+) antiport activity by supporting proton efflux to control proton extrusion and homeostasis in chloroplasts in a light-dependent manner to modulate photosynthesis. Prevents excessive induction of non-photochemical quenching (NPQ) under continuous-light conditions. Indirectly promotes efficient inorganic carbon uptake into chloroplasts. The protein is Potassium/proton antiporter CemA of Tupiella akineta (Green alga).